The sequence spans 318 residues: Olfactory receptor-like protein COR1 (318 aa).

Residues 1–26 lie on the Extracellular side of the membrane; the sequence is MASGNCTTPTTFILSGLTDNPGLQMP. Asn5 carries an N-linked (GlcNAc...) asparagine glycan. A helical transmembrane segment spans residues 27–49; that stretch reads LFMVFLAIYTITLLTNLGLIALI. Residues 50-57 are Cytoplasmic-facing; it reads SVDLHLQT. Residues 58-79 form a helical membrane-spanning segment; the sequence is PMYIFLQNLSFTDAAYSTVITP. Residues 80–100 lie on the Extracellular side of the membrane; it reads KMLATFLEERKTISYVGCILQ. The cysteines at positions 97 and 179 are disulfide-linked. A helical membrane pass occupies residues 101 to 120; that stretch reads YFSFVLLTVTESLLLAVMAY. Topologically, residues 121 to 139 are cytoplasmic; that stretch reads DRYVAICKPLLYPSIMTKA. Residues 140-164 form a helical membrane-spanning segment; sequence VCWRLVESLYFLAFLNSLVHTSGLL. At 165-205 the chain is on the extracellular side; that stretch reads KLSFCYSNVVNHFFCDISPLFQISSSSIAISELLVIISGSL. A helical transmembrane segment spans residues 206–226; sequence FVMSSIIIILISYVFIILTVV. Over 227-239 the chain is Cytoplasmic; the sequence is MIRSKDGKYKAFS. Residues 240–260 traverse the membrane as a helical segment; sequence TCTSHLMAVSLFHGTVIFMYL. Residues 261–271 are Extracellular-facing; it reads RPVKLFSLDTD. The chain crosses the membrane as a helical span at residues 272 to 292; sequence KIASLFYTVVIPMLNPLIYSW. The Cytoplasmic segment spans residues 293-318; that stretch reads RNKEVKDALRRLTATTFGFIDSKAVQ.

The protein belongs to the G-protein coupled receptor 1 family.

It localises to the cell membrane. Functionally, odorant receptor. The polypeptide is Olfactory receptor-like protein COR1 (COR1) (Gallus gallus (Chicken)).